We begin with the raw amino-acid sequence, 374 residues long: tRNA-specific 2-thiouridylase MnmA (374 aa).

ATP is bound by residues 12-19 (GMSGGVDS) and methionine 38. Residues 98–100 (NPD) are interaction with target base in tRNA. Cysteine 103 (nucleophile) is an active-site residue. Residues cysteine 103 and cysteine 200 are joined by a disulfide bond. Position 127 (glycine 127) interacts with ATP. The segment at 150–152 (KDQ) is interaction with tRNA. Cysteine 200 (cysteine persulfide intermediate) is an active-site residue. Residues 311–312 (RY) form an interaction with tRNA region.

It belongs to the MnmA/TRMU family.

Its subcellular location is the cytoplasm. It carries out the reaction S-sulfanyl-L-cysteinyl-[protein] + uridine(34) in tRNA + AH2 + ATP = 2-thiouridine(34) in tRNA + L-cysteinyl-[protein] + A + AMP + diphosphate + H(+). Functionally, catalyzes the 2-thiolation of uridine at the wobble position (U34) of tRNA, leading to the formation of s(2)U34. In Lactiplantibacillus plantarum (strain ATCC BAA-793 / NCIMB 8826 / WCFS1) (Lactobacillus plantarum), this protein is tRNA-specific 2-thiouridylase MnmA.